The chain runs to 412 residues: MQILKENASNQRFVTRESEVNRICCGFNGFQLGERLRRDMKTSSITTLVVNTTTYFFKDTTELIDFKEKRIDLYEYARYGNPTTMALEEKISVLEGAESTLVMASGMYASNVMLLALVPTNGHIVATKDCYKETRIFMENFLTKLGITVTFIDSDDIAGLQTLVNNHEVSLFFTESPTNPFLRCVDIKLVSKICHRRGTLVCIDATIATPINQKTLALGADLVHHSATKYIGGHNDFLAGSISGSMELVSKIRNLHKLLGGTLNPNAAYLLIRGMKTMHLRVRQQNSTGMKMAQVLEAHPKVSRVYYLGLPSHPEHLIAKRQMTGIGGLISFEIDGDLKTTIKFIDALKIPYLAASFGGCESLVDQLATGIWDIPREERLKDGFQDNLVRFSFGIEDFEDIKADVLQALETI.

Residues Y76, R78, G106, M107, Y131, S226, and T228 each contribute to the pyridoxal 5'-phosphate site. Position 229 is an N6-(pyridoxal phosphate)lysine (K229).

This sequence belongs to the trans-sulfuration enzymes family. The cofactor is pyridoxal 5'-phosphate.

It catalyses the reaction O-phospho-L-homoserine + L-cysteine = L,L-cystathionine + phosphate. It carries out the reaction O-succinyl-L-homoserine + L-cysteine = L,L-cystathionine + succinate + H(+). It participates in amino-acid biosynthesis; L-methionine biosynthesis via de novo pathway; L-cystathionine from O-succinyl-L-homoserine: step 1/1. In terms of biological role, catalyzes the first committed step of methionine (Met) biosynthesis. Catalyzes the formation of L-cystathionine from homoserine esters and L-cysteine, via a gamma-replacement reaction. The chain is Probable cystathionine gamma-synthase 2 from Arabidopsis thaliana (Mouse-ear cress).